Consider the following 274-residue polypeptide: Ribosomal RNA small subunit methyltransferase A (274 aa).

Histidine 15, leucine 17, glycine 42, glutamate 64, aspartate 89, and asparagine 109 together coordinate S-adenosyl-L-methionine.

This sequence belongs to the class I-like SAM-binding methyltransferase superfamily. rRNA adenine N(6)-methyltransferase family. RsmA subfamily.

The protein resides in the cytoplasm. The catalysed reaction is adenosine(1518)/adenosine(1519) in 16S rRNA + 4 S-adenosyl-L-methionine = N(6)-dimethyladenosine(1518)/N(6)-dimethyladenosine(1519) in 16S rRNA + 4 S-adenosyl-L-homocysteine + 4 H(+). Specifically dimethylates two adjacent adenosines (A1518 and A1519) in the loop of a conserved hairpin near the 3'-end of 16S rRNA in the 30S particle. May play a critical role in biogenesis of 30S subunits. This Synechococcus sp. (strain CC9605) protein is Ribosomal RNA small subunit methyltransferase A.